A 262-amino-acid polypeptide reads, in one-letter code: GTP cyclohydrolase 1 type 2 homolog (262 aa).

The a divalent metal cation site is built by His68, His69, Asp108, His226, and Glu229.

The protein belongs to the GTP cyclohydrolase I type 2/NIF3 family. As to quaternary structure, homohexamer.

This chain is GTP cyclohydrolase 1 type 2 homolog, found in Ureaplasma parvum serovar 3 (strain ATCC 700970).